We begin with the raw amino-acid sequence, 400 residues long: Argininosuccinate synthase (400 aa).

10-18 provides a ligand contact to ATP; it reads AYSGGVDTS. Tyr89 is an L-citrulline binding site. Gly119 is an ATP binding site. 3 residues coordinate L-aspartate: Thr121, Asn125, and Asp126. Asn125 is a binding site for L-citrulline. Residues Arg129, Ser177, Ser186, Glu262, and Tyr274 each coordinate L-citrulline.

Belongs to the argininosuccinate synthase family. Type 1 subfamily. Homotetramer.

The protein localises to the cytoplasm. The enzyme catalyses L-citrulline + L-aspartate + ATP = 2-(N(omega)-L-arginino)succinate + AMP + diphosphate + H(+). Its pathway is amino-acid biosynthesis; L-arginine biosynthesis; L-arginine from L-ornithine and carbamoyl phosphate: step 2/3. The chain is Argininosuccinate synthase from Synechococcus sp. (strain JA-2-3B'a(2-13)) (Cyanobacteria bacterium Yellowstone B-Prime).